Reading from the N-terminus, the 162-residue chain is Protein cornichon homolog 2 (162 aa).

The Cytoplasmic portion of the chain corresponds to 1–10 (MAFTFAAFCY). A helical membrane pass occupies residues 11–31 (MLTLVLCASLIFFIIWHIIAF). Residues 32–72 (DELRTDFKNPIEQGNPSRARERVKNVERICCLLRKLVVPEY) lie on the Lumenal side of the membrane. A helical membrane pass occupies residues 73-93 (CIHGLFCLMFMCAAEWVTLGL). Residues 94–138 (NIPLLFYHLWRYFHRPADGSEVMFDPVSIMNVDILNYCQKEAWCK) lie on the Cytoplasmic side of the membrane. The chain crosses the membrane as a helical span at residues 139–161 (LAFYLLSFFYYLYRVGATVRYVS). Position 162 (A162) is a topological domain, lumenal.

This sequence belongs to the cornichon family.

The protein localises to the membrane. Regulates the trafficking and gating properties of AMPA-selective glutamate receptors (AMPARs). The protein is Protein cornichon homolog 2 (cnih2) of Xenopus tropicalis (Western clawed frog).